A 267-amino-acid polypeptide reads, in one-letter code: Tryptophan synthase alpha chain (267 aa).

Residues Glu-49 and Asp-60 each act as proton acceptor in the active site.

Belongs to the TrpA family. As to quaternary structure, tetramer of two alpha and two beta chains.

It carries out the reaction (1S,2R)-1-C-(indol-3-yl)glycerol 3-phosphate + L-serine = D-glyceraldehyde 3-phosphate + L-tryptophan + H2O. It functions in the pathway amino-acid biosynthesis; L-tryptophan biosynthesis; L-tryptophan from chorismate: step 5/5. The alpha subunit is responsible for the aldol cleavage of indoleglycerol phosphate to indole and glyceraldehyde 3-phosphate. The polypeptide is Tryptophan synthase alpha chain (Carboxydothermus hydrogenoformans (strain ATCC BAA-161 / DSM 6008 / Z-2901)).